We begin with the raw amino-acid sequence, 261 residues long: 3-methyl-2-oxobutanoate hydroxymethyltransferase (261 aa).

Residues aspartate 42 and aspartate 81 each contribute to the Mg(2+) site. Residues 42-43 (DS), aspartate 81, and lysine 110 each bind 3-methyl-2-oxobutanoate. A Mg(2+)-binding site is contributed by glutamate 112. Catalysis depends on glutamate 179, which acts as the Proton acceptor.

The protein belongs to the PanB family. Homodecamer; pentamer of dimers. Mg(2+) is required as a cofactor.

It localises to the cytoplasm. The catalysed reaction is 3-methyl-2-oxobutanoate + (6R)-5,10-methylene-5,6,7,8-tetrahydrofolate + H2O = 2-dehydropantoate + (6S)-5,6,7,8-tetrahydrofolate. Its pathway is cofactor biosynthesis; coenzyme A biosynthesis. Functionally, catalyzes the reversible reaction in which hydroxymethyl group from 5,10-methylenetetrahydrofolate is transferred onto alpha-ketoisovalerate to form ketopantoate. This chain is 3-methyl-2-oxobutanoate hydroxymethyltransferase, found in Pyrobaculum islandicum (strain DSM 4184 / JCM 9189 / GEO3).